The chain runs to 312 residues: Methionyl-tRNA formyltransferase (312 aa).

117 to 120 (SLLP) serves as a coordination point for (6S)-5,6,7,8-tetrahydrofolate.

This sequence belongs to the Fmt family.

It carries out the reaction L-methionyl-tRNA(fMet) + (6R)-10-formyltetrahydrofolate = N-formyl-L-methionyl-tRNA(fMet) + (6S)-5,6,7,8-tetrahydrofolate + H(+). Attaches a formyl group to the free amino group of methionyl-tRNA(fMet). The formyl group appears to play a dual role in the initiator identity of N-formylmethionyl-tRNA by promoting its recognition by IF2 and preventing the misappropriation of this tRNA by the elongation apparatus. This Bordetella parapertussis (strain 12822 / ATCC BAA-587 / NCTC 13253) protein is Methionyl-tRNA formyltransferase.